A 58-amino-acid polypeptide reads, in one-letter code: Large ribosomal subunit protein bL32 (58 aa).

A compositionally biased stretch (basic residues) spans 1–19; that stretch reads MAVPKRKTSKSNTKMRRAA. A disordered region spans residues 1–22; sequence MAVPKRKTSKSNTKMRRAANSK.

The protein belongs to the bacterial ribosomal protein bL32 family.

This is Large ribosomal subunit protein bL32 from Clostridioides difficile (strain 630) (Peptoclostridium difficile).